Here is a 289-residue protein sequence, read N- to C-terminus: MPELPEVETIRRTLAPVLIGALVIGALRGEHPEDILLDPWPVFARRVRRHRIVALERRGKYLAARFEDGDRLVIHLGMTGELRLSHPATAPGKHCHLALVLRSLRPLPPSLVDQRQRFLLRYLDIRRFGRIALLDQAGWETFTARLGPEPLDPTLDPRALWSRLRERRTAIKAALLDQALLAGIGNIYADEALFQARLHPARRCQTLSLDEVERLLVALRTVLSAAIENAGTTIRDYRDGQGRAGSFQSRLQVYGKPAGTPCPRCGTGLARIRIAGRSSVFCPRCQPLH.

Residue proline 2 is the Schiff-base intermediate with DNA of the active site. Glutamate 3 (proton donor) is an active-site residue. Lysine 60 (proton donor; for beta-elimination activity) is an active-site residue. DNA contacts are provided by histidine 94, arginine 126, and arginine 167. The FPG-type zinc finger occupies 252–287 (QVYGKPAGTPCPRCGTGLARIRIAGRSSVFCPRCQP). Arginine 277 functions as the Proton donor; for delta-elimination activity in the catalytic mechanism.

It belongs to the FPG family. In terms of assembly, monomer. Zn(2+) serves as cofactor.

It carries out the reaction Hydrolysis of DNA containing ring-opened 7-methylguanine residues, releasing 2,6-diamino-4-hydroxy-5-(N-methyl)formamidopyrimidine.. It catalyses the reaction 2'-deoxyribonucleotide-(2'-deoxyribose 5'-phosphate)-2'-deoxyribonucleotide-DNA = a 3'-end 2'-deoxyribonucleotide-(2,3-dehydro-2,3-deoxyribose 5'-phosphate)-DNA + a 5'-end 5'-phospho-2'-deoxyribonucleoside-DNA + H(+). Involved in base excision repair of DNA damaged by oxidation or by mutagenic agents. Acts as a DNA glycosylase that recognizes and removes damaged bases. Has a preference for oxidized purines, such as 7,8-dihydro-8-oxoguanine (8-oxoG). Has AP (apurinic/apyrimidinic) lyase activity and introduces nicks in the DNA strand. Cleaves the DNA backbone by beta-delta elimination to generate a single-strand break at the site of the removed base with both 3'- and 5'-phosphates. This is Formamidopyrimidine-DNA glycosylase from Thermomicrobium roseum (strain ATCC 27502 / DSM 5159 / P-2).